A 486-amino-acid chain; its full sequence is MLRRALRLRLGPCLSGRGLGTYRRGSTLDWDGKVSEIKKKIQSIFPGGAWNPLYDTSHLPPERSDVVIVGGGVLGLSVAYWLKRLEKQQGAIRVLVVERDHTYARASTVLSVGGIRQQFSLPQNVQLSLFSAEFLRNINEYLAVVDDPPLDLQFNPSGYLLLASEEGAAIMERNVKMQRQEGAKVCLMSPEQLQKKFPWINTEGVALASYGLENEGWFDPWCLLQGLRRKLQSMGVLFCQGEVTRFISSSSHMETASGEQLTLKRIHEVHVKMDHSQEFQPVECAIVVNAAGAWSGQIAELAGVGNGPPGTMQGTKLPVEPRKRYVYLWHCPQGPGLEAPLVADPSGAYFRREGLGNNYVGSCSPTEEEEPDPGNLEVDYDFFQEKVWPRLAQRVPAFETLKVRSAWAGYYDYNTFDQNGVVGPHPLVVNMYFATGFSGHGLQQAPAVGRAVAEMVLEGHFQTINLSPFLFSRFYFGEKAQEHCIL.

A helical transmembrane segment spans residues 66–82; sequence VVIVGGGVLGLSVAYWL.

Associates with components of the mitochondrial respiratory chain complex I. It depends on FAD as a cofactor.

The protein localises to the mitochondrion inner membrane. Functionally, required for the assembly of the mitochondrial membrane respiratory chain NADH dehydrogenase (Complex I). Involved in mid-late stages of complex I assembly. The polypeptide is FAD-dependent oxidoreductase domain-containing protein 1 (FOXRED1) (Bos taurus (Bovine)).